Consider the following 418-residue polypeptide: Gamma-glutamyl phosphate reductase (418 aa).

Belongs to the gamma-glutamyl phosphate reductase family.

The protein resides in the cytoplasm. The enzyme catalyses L-glutamate 5-semialdehyde + phosphate + NADP(+) = L-glutamyl 5-phosphate + NADPH + H(+). The protein operates within amino-acid biosynthesis; L-proline biosynthesis; L-glutamate 5-semialdehyde from L-glutamate: step 2/2. In terms of biological role, catalyzes the NADPH-dependent reduction of L-glutamate 5-phosphate into L-glutamate 5-semialdehyde and phosphate. The product spontaneously undergoes cyclization to form 1-pyrroline-5-carboxylate. This Teredinibacter turnerae (strain ATCC 39867 / T7901) protein is Gamma-glutamyl phosphate reductase.